We begin with the raw amino-acid sequence, 62 residues long: Large ribosomal subunit protein uL29 (62 aa).

This sequence belongs to the universal ribosomal protein uL29 family.

In Trichlorobacter lovleyi (strain ATCC BAA-1151 / DSM 17278 / SZ) (Geobacter lovleyi), this protein is Large ribosomal subunit protein uL29.